A 288-amino-acid chain; its full sequence is Transmembrane and coiled-coil domain-containing protein 5A (288 aa).

The stretch at 10 to 189 forms a coiled coil; it reads KKNIISLNMD…ELETGYLERE (180 aa). The chain crosses the membrane as a helical span at residues 227–249; the sequence is SLLFSTLFFIRLLGYLIFHLSFI.

The protein belongs to the TMCO5 family. Only detected in testis (at protein level).

The protein localises to the endoplasmic reticulum membrane. Its subcellular location is the nucleus membrane. The chain is Transmembrane and coiled-coil domain-containing protein 5A (Tmco5a) from Mus musculus (Mouse).